The following is a 369-amino-acid chain: Peptidyl-prolyl cis-trans isomerase D (369 aa).

A PPIase cyclophilin-type domain is found at 8–173 (YFDLSIGGKP…ADVRIDACGI (166 aa)). 3 TPR repeats span residues 218–251 (VEAVKAIGTAQLQAARFDVAVQKYAKAAGFLQEY), 269–302 (VAVHLNLALAALKAGNHQRVLSAASEVLHGAADD), and 306–339 (AKALYRRGLAYHHLKDPEMALTDLELAATYQPGD).

The protein belongs to the cyclophilin-type PPIase family. PPIase D subfamily.

The protein localises to the cytoplasm. It catalyses the reaction [protein]-peptidylproline (omega=180) = [protein]-peptidylproline (omega=0). Functionally, PPIases accelerate the folding of proteins. It catalyzes the cis-trans isomerization of proline imidic peptide bonds in oligopeptides. This chain is Peptidyl-prolyl cis-trans isomerase D (CPR6), found in Eremothecium gossypii (strain ATCC 10895 / CBS 109.51 / FGSC 9923 / NRRL Y-1056) (Yeast).